The primary structure comprises 205 residues: Ephrin-A1 (205 aa).

An N-terminal signal peptide occupies residues 1-18 (MEFFWASLLGLCCSLAAA). Residues 19–151 (NRHTVFWNSS…RLKVMIAGKI (133 aa)) enclose the Ephrin RBD domain. The N-linked (GlcNAc...) asparagine glycan is linked to Asn-26. Disulfide bonds link Cys-51/Cys-92 and Cys-80/Cys-140. Ser-182 is lipidated: GPI-anchor amidated serine. The propeptide at 183-205 (AAPRLFPLAWAVLLLPFLLLQIP) is removed in mature form.

Belongs to the ephrin family. Monomer. Homodimer. Forms heterodimers with EPHA2. Binds to the receptor tyrosine kinases EPHA2, EPHA3, EPHA4, EPHA5, EPHA6 and EPHA7. Also binds with low affinity to EPHA1. Undergoes proteolysis by a metalloprotease to give rise to a soluble monomeric form. In terms of processing, N-Glycosylation is required for binding to EPHA2 receptor and inducing its internalization.

It localises to the cell membrane. The protein resides in the secreted. Functionally, cell surface GPI-bound ligand for Eph receptors, a family of receptor tyrosine kinases which are crucial for migration, repulsion and adhesion during neuronal, vascular and epithelial development. Binds promiscuously Eph receptors residing on adjacent cells, leading to contact-dependent bidirectional signaling into neighboring cells. Plays an important role in angiogenesis and tumor neovascularization. The recruitment of VAV2, VAV3 and PI3-kinase p85 subunit by phosphorylated EPHA2 is critical for EFNA1-induced RAC1 GTPase activation and vascular endothelial cell migration and assembly. Exerts anti-oncogenic effects in tumor cells through activation and down-regulation of EPHA2. Activates EPHA2 by inducing tyrosine phosphorylation which leads to its internalization and degradation. Acts as a negative regulator in the tumorigenesis of gliomas by down-regulating EPHA2 and FAK. Can evoke collapse of embryonic neuronal growth cone and regulates dendritic spine morphogenesis. In Bos taurus (Bovine), this protein is Ephrin-A1 (EFNA1).